The following is a 274-amino-acid chain: NH(3)-dependent NAD(+) synthetase (274 aa).

46 to 53 (GISGGQDS) is an ATP binding site. Mg(2+) is bound at residue D52. Residue R140 coordinates deamido-NAD(+). T160 is a binding site for ATP. E165 provides a ligand contact to Mg(2+). Positions 173 and 180 each coordinate deamido-NAD(+). 2 residues coordinate ATP: K189 and T211. 260 to 261 (HK) is a binding site for deamido-NAD(+).

It belongs to the NAD synthetase family. As to quaternary structure, homodimer.

The enzyme catalyses deamido-NAD(+) + NH4(+) + ATP = AMP + diphosphate + NAD(+) + H(+). The protein operates within cofactor biosynthesis; NAD(+) biosynthesis; NAD(+) from deamido-NAD(+) (ammonia route): step 1/1. Catalyzes the ATP-dependent amidation of deamido-NAD to form NAD. Uses ammonia as a nitrogen source. The protein is NH(3)-dependent NAD(+) synthetase of Streptococcus equi subsp. zooepidemicus (strain MGCS10565).